The primary structure comprises 694 residues: DNA-directed RNA polymerase subunit beta' (694 aa).

Zn(2+) contacts are provided by Cys69, Cys71, Cys87, and Cys90. Residues Asp489, Asp491, and Asp493 each contribute to the Mg(2+) site.

It belongs to the RNA polymerase beta' chain family. RpoC1 subfamily. In plastids the minimal PEP RNA polymerase catalytic core is composed of four subunits: alpha, beta, beta', and beta''. When a (nuclear-encoded) sigma factor is associated with the core the holoenzyme is formed, which can initiate transcription. Requires Mg(2+) as cofactor. It depends on Zn(2+) as a cofactor.

It is found in the plastid. It localises to the chloroplast. The enzyme catalyses RNA(n) + a ribonucleoside 5'-triphosphate = RNA(n+1) + diphosphate. In terms of biological role, DNA-dependent RNA polymerase catalyzes the transcription of DNA into RNA using the four ribonucleoside triphosphates as substrates. The polypeptide is DNA-directed RNA polymerase subunit beta' (Adiantum capillus-veneris (Maidenhair fern)).